The following is a 239-amino-acid chain: Ribonuclease PH (239 aa).

Phosphate is bound by residues R88 and 126 to 128 (GTR).

It belongs to the RNase PH family. In terms of assembly, homohexameric ring arranged as a trimer of dimers.

It carries out the reaction tRNA(n+1) + phosphate = tRNA(n) + a ribonucleoside 5'-diphosphate. Its function is as follows. Phosphorolytic 3'-5' exoribonuclease that plays an important role in tRNA 3'-end maturation. Removes nucleotide residues following the 3'-CCA terminus of tRNAs; can also add nucleotides to the ends of RNA molecules by using nucleoside diphosphates as substrates, but this may not be physiologically important. Probably plays a role in initiation of 16S rRNA degradation (leading to ribosome degradation) during starvation. The chain is Ribonuclease PH from Coxiella burnetii (strain Dugway 5J108-111).